A 540-amino-acid polypeptide reads, in one-letter code: PTS system alpha-glucoside-specific EIICB component (540 aa).

One can recognise a PTS EIIC type-1 domain in the interval 1–420 (MLSQIQRFGG…LNLKTPGREE (420 aa)). A run of 11 helical transmembrane segments spans residues 12–32 (MFTPVLLFPFAGIVVGIAIML), 87–107 (ACLAVLVSFLTWNYFINAMGM), 130–150 (IAGIKTLDTSIIGAIVISGLV), 174–194 (FVVIVAFLAMIPCAWLTLLGW), 201–221 (IESLQAFLRSAGALGVWVYIF), 225–245 (ILIPTGLHHFVYGPFIFGPAV), 277–297 (FALHGNSKVFGSVGIALALYF), 307–327 (VAGLLIPATLTAMLVGITEPL), 329–349 (FTFLFISPLLFAVHAVLAATM), 352–372 (VMYICGVVGNFGGGLLDQFLP), and 384–404 (SMMFIQIGIGLCFTALYFVVF). Residues 448–530 (LGQAAGFLQA…ENLMKDSLST (83 aa)) enclose the PTS EIIB type-1 domain. Cys470 (phosphocysteine intermediate; for EIIB activity) is an active-site residue.

The protein localises to the cell membrane. In terms of biological role, the phosphoenolpyruvate-dependent sugar phosphotransferase system (sugar PTS), a major carbohydrate active -transport system, catalyzes the phosphorylation of incoming sugar substrates concomitantly with their translocation across the cell membrane. This system is involved in alpha-glucoside transport. Its function is as follows. Involved in the transport and simultaneous phosphorylation at O-6 of the glucosyl moiety of sucrose and its five linkage-isomeric alpha-D-glucosyl-D-fructoses. Can also transport maltose, isomaltose and maltitol, phosphorylating at O-6 of their non-reducing glucose portion. The chain is PTS system alpha-glucoside-specific EIICB component (aglA) from Klebsiella pneumoniae.